The primary structure comprises 52 residues: Rubredoxin (52 aa).

In terms of domain architecture, Rubredoxin-like spans 1 to 51 (MDKYECSICGYIYDEAEGDDGNVAAGTKFADLPADWVCPTCGADKDAFVKM). Positions 6, 9, 38, and 41 each coordinate Fe cation.

The protein belongs to the rubredoxin family. Fe(3+) is required as a cofactor.

Rubredoxin is a small nonheme, iron protein lacking acid-labile sulfide. Its single Fe, chelated to 4 Cys, functions as an electron acceptor and may also stabilize the conformation of the molecule. The protein is Rubredoxin of Megasphaera elsdenii.